We begin with the raw amino-acid sequence, 426 residues long: MPGEVSRSLYEKALTLFPGGVNSPVRAAVKPYPFYVERAEGPYIYTVDGEKLIDYVLAYGPLILGHKHPRVEEAVRRQLEKGWLYGAPYELEIRLAEKILKYYHPGGMVRFVNTGTEATMTAIRLARGVTGRKYIVKFNGCYHGAHDAVLVGAGSAAAEYGVPTSKGIPEEVAKLTLVAKYNDIESVEKIMSKHGDEVAAIIVEPVAGNAGVIPPKKGFLQELRRIASEHGALLIMDEVITGFRLALGGAQEYYRVKADITTLGKIVGGGFPIGVVVADRKIMEHLTPSGKVFNAGTFNAHPVTMAAGLATIEVLEEGTPYRVASEAGRALAEELESLVLSYGIDAAVNHVESMLQIFFVKGEVWSPEDAAKSDKKLYLKLHEELLKLGVFIAPSQMEAIFTSAAHTSDVVSETIEKLRKAFKRLR.

Residue Lys265 is modified to N6-(pyridoxal phosphate)lysine.

The protein belongs to the class-III pyridoxal-phosphate-dependent aminotransferase family. HemL subfamily. It depends on pyridoxal 5'-phosphate as a cofactor.

It localises to the cytoplasm. The enzyme catalyses (S)-4-amino-5-oxopentanoate = 5-aminolevulinate. It functions in the pathway porphyrin-containing compound metabolism; protoporphyrin-IX biosynthesis; 5-aminolevulinate from L-glutamyl-tRNA(Glu): step 2/2. This is Glutamate-1-semialdehyde 2,1-aminomutase from Hyperthermus butylicus (strain DSM 5456 / JCM 9403 / PLM1-5).